The primary structure comprises 447 residues: Tubulin beta-4 chain (447 aa).

Positions 11, 69, 138, 142, 143, 144, 204, and 226 each coordinate GTP. E69 is a binding site for Mg(2+). The tract at residues 423 to 447 (QQYQDATADEEGEYEDEEQQEADDM) is disordered. A compositionally biased stretch (acidic residues) spans 429-447 (TADEEGEYEDEEQQEADDM).

This sequence belongs to the tubulin family. In terms of assembly, dimer of alpha and beta chains. A typical microtubule is a hollow water-filled tube with an outer diameter of 25 nm and an inner diameter of 15 nM. Alpha-beta heterodimers associate head-to-tail to form protofilaments running lengthwise along the microtubule wall with the beta-tubulin subunit facing the microtubule plus end conferring a structural polarity. Microtubules usually have 13 protofilaments but different protofilament numbers can be found in some organisms and specialized cells. Mg(2+) serves as cofactor. As to expression, expressed in roots and leaf sheaths.

It localises to the cytoplasm. The protein resides in the cytoskeleton. Tubulin is the major constituent of microtubules, a cylinder consisting of laterally associated linear protofilaments composed of alpha- and beta-tubulin heterodimers. Microtubules grow by the addition of GTP-tubulin dimers to the microtubule end, where a stabilizing cap forms. Below the cap, tubulin dimers are in GDP-bound state, owing to GTPase activity of alpha-tubulin. This chain is Tubulin beta-4 chain (TUBB4), found in Oryza sativa subsp. japonica (Rice).